We begin with the raw amino-acid sequence, 357 residues long: Anthranilate phosphoribosyltransferase (357 aa).

5-phospho-alpha-D-ribose 1-diphosphate is bound by residues Gly-91, Gly-94–Asp-95, Thr-99, Asn-101–Thr-104, Lys-119–Ser-127, and Ser-131. Gly-91 provides a ligand contact to anthranilate. Ser-103 is a Mg(2+) binding site. Asn-122 provides a ligand contact to anthranilate. Arg-177 is a binding site for anthranilate. Mg(2+)-binding residues include Asp-235 and Glu-236.

The protein belongs to the anthranilate phosphoribosyltransferase family. In terms of assembly, homodimer. It depends on Mg(2+) as a cofactor.

It catalyses the reaction N-(5-phospho-beta-D-ribosyl)anthranilate + diphosphate = 5-phospho-alpha-D-ribose 1-diphosphate + anthranilate. The protein operates within amino-acid biosynthesis; L-tryptophan biosynthesis; L-tryptophan from chorismate: step 2/5. In terms of biological role, catalyzes the transfer of the phosphoribosyl group of 5-phosphorylribose-1-pyrophosphate (PRPP) to anthranilate to yield N-(5'-phosphoribosyl)-anthranilate (PRA). The protein is Anthranilate phosphoribosyltransferase of Shewanella baltica (strain OS195).